A 1251-amino-acid polypeptide reads, in one-letter code: DNA repair protein REV1 (1251 aa).

A BRCT domain is found at 44–131 (TSSTIFSGVA…RLLSYIPYQL (88 aa)). 2 disordered regions span residues 206-236 (TSPG…NGAL) and 282-342 (STRN…VPSK). The span at 282–320 (STRNTDALRNPHRTNSFSLSPLHSNTKINGAHHSTVQGP) shows a compositional bias: polar residues. The segment covering 321 to 342 (SSTKSTSSVSTFSKAAPSVPSK) has biased composition (low complexity). Residues 352-362 (FYSHSRLHHIS) are interaction with target DNA. DCTP-binding positions include arginine 357, 423–427 (DMDCF), 510–516 (SCSYEAR), asparagine 522, and aspartate 570. One can recognise a UmuC domain in the interval 419–653 (IMHVDMDCFF…QLVTNLPGVG (235 aa)). Position 423 (aspartate 423) interacts with Mg(2+). Residues aspartate 570 and glutamate 571 each coordinate Mg(2+). Interaction with target DNA regions lie at residues 653–656 (GHSM) and 709–717 (RKSVSAEIN). Disordered regions lie at residues 1035-1096 (AYDQ…KLLN) and 1119-1147 (HEGP…LQSD). A compositionally biased stretch (polar residues) spans 1043–1056 (GENSTHQQSASASV). Residues 1070 to 1079 (EKKRNKKKKT) are compositionally biased toward basic residues. Residues 1071–1078 (KKRNKKKK) carry the Nuclear localization signal motif. Basic and acidic residues predominate over residues 1119–1129 (HEGPPAEKPLE). Residues 1132–1146 (SASTSGVPGLSSLQS) are compositionally biased toward polar residues. Residues 1150 to 1249 (GCVRPPAPNL…LQQTYGSTLK (100 aa)) form a protein interaction domain; mediates interaction with DNA polymerase zeta region.

It belongs to the DNA polymerase type-Y family. As to quaternary structure, monomer. Interacts with the DNA polymerase zeta which is composed of REV3L and MAD2L2; the interaction with MAD2L2 is direct and requires that REV3L is in its closed conformation. Interacts with POLH, POLI and POLK. May bind ITGA3. Interacts with FAAP20/C1orf86. Ubiquitous.

The protein localises to the nucleus. In terms of biological role, deoxycytidyl transferase involved in DNA repair. Transfers a dCMP residue from dCTP to the 3'-end of a DNA primer in a template-dependent reaction. May assist in the first step in the bypass of abasic lesions by the insertion of a nucleotide opposite the lesion. Required for normal induction of mutations by physical and chemical agents. The polypeptide is DNA repair protein REV1 (REV1) (Homo sapiens (Human)).